The chain runs to 818 residues: Protein Cep78 homolog (818 aa).

3 disordered regions span residues 513–589 (LDVE…HEFA), 691–748 (RQAN…TEAT), and 768–798 (KQSE…DQNV). Residues 514–539 (DVEEEEEEEEEEQQAEESQSESEPQN) are compositionally biased toward acidic residues. Over residues 561-589 (VRSEIKYVENNPKEAAKKNRESKSDHEFA) the composition is skewed to basic and acidic residues. Residues 782 to 792 (GDAGGGGGSGD) show a composition bias toward gly residues.

The protein belongs to the CEP78 family.

The protein resides in the cytoplasm. The protein localises to the cytoskeleton. Its subcellular location is the microtubule organizing center. It is found in the centrosome. It localises to the centriole. The protein resides in the cilium basal body. Functionally, may play a role in cilium biogenesis. The polypeptide is Protein Cep78 homolog (Drosophila melanogaster (Fruit fly)).